A 417-amino-acid polypeptide reads, in one-letter code: Carboxypeptidase B (417 aa).

The first 15 residues, 1–15, serve as a signal peptide directing secretion; that stretch reads MLALLVLVTVALASA. A propeptide spans 16 to 110 (activation peptide); the sequence is HHGGEHFEGE…VEAQFDSRVR (95 aa). The region spanning 118 to 412 is the Peptidase M14 domain; the sequence is KYNKWETIEA…LAIKYVASYV (295 aa). Cysteine 173 and cysteine 186 are oxidised to a cystine. 2 residues coordinate Zn(2+): histidine 176 and glutamate 179. Residues 176-179, arginine 234, and 251-252 each bind substrate; these read HARE and NR. 2 disulfide bridges follow: cysteine 245–cysteine 268 and cysteine 259–cysteine 273. Histidine 304 contacts Zn(2+). Substrate contacts are provided by residues 305–306 and tyrosine 356; that span reads SY. Glutamate 378 (proton donor/acceptor) is an active-site residue.

This sequence belongs to the peptidase M14 family. Zn(2+) is required as a cofactor. Pancreas.

It localises to the secreted. The protein resides in the zymogen granule lumen. It catalyses the reaction Preferential release of a C-terminal lysine or arginine amino acid.. In Homo sapiens (Human), this protein is Carboxypeptidase B (CPB1).